Here is a 321-residue protein sequence, read N- to C-terminus: MRIGHFQLTNCLIAAPMAGITDRPFRALCHGMGAGMAVSEMLSSNPEVWRTDKSRLRMVHVDEPGIRNVQIAGNDPDEMAAAARINVASGAQIIDINMGCPAKKVNRKLAGSALLQHPDLVKQILSAVVNAVDVPVTLKIRTGWSPEHRNCIEIAQLAENCGIQALTIHGRTRSCLFNGEAEYDSIRAVKQTVSIPVIANGDITDPHKARAVLDYTGADALMIGRAAQGRPWIFREIQHYLDTGELLPPMPLGEVQRLLDGHIRELHDFYGPGKGFRIARKHVSWYLQEHAPNDQFRRTFNAIEDASEQLEALEAYFENLA.

Residues 16 to 18 (PMA) and Gln70 each bind FMN. The active-site Proton donor is the Cys100. Residues Lys139, 200–202 (NGD), and 224–225 (GR) contribute to the FMN site.

It belongs to the Dus family. DusB subfamily. The cofactor is FMN.

It carries out the reaction a 5,6-dihydrouridine in tRNA + NAD(+) = a uridine in tRNA + NADH + H(+). The enzyme catalyses a 5,6-dihydrouridine in tRNA + NADP(+) = a uridine in tRNA + NADPH + H(+). In terms of biological role, catalyzes the synthesis of 5,6-dihydrouridine (D), a modified base found in the D-loop of most tRNAs, via the reduction of the C5-C6 double bond in target uridines. This is tRNA-dihydrouridine synthase B from Yersinia pestis.